A 311-amino-acid polypeptide reads, in one-letter code: MEVPENIKKRVTIPFEEHFYAGHTACQGCGASLGLRYVLKAYGKKTILVIPACCSTIIAGPWPYSAIDANLFHTAFETTGAVISGIEAALKAMGYKVKGEDGIMVVGWAGDGGTADIGLQALSGFLERGHDAVYIMYDNEAYMNTGIQRSSSTPYGAWTTNTPGGRRHFLEKRHKKKVIDIVIAHRIPYAATASIAYPEDFIRKLKKAQKISGPSFIQLFAPCPTGWRAPTDKSIEIARLAVQTAYFPLFEYENGKYKINMPNPKKEPKPIEEFLKLQGRFKYMTKEDIETLQKWVLEEWERLKKLAEVFG.

In terms of assembly, heterotetramer of one alpha, one beta, one delta and one gamma chain.

The enzyme catalyses 3-methyl-2-oxobutanoate + 2 oxidized [2Fe-2S]-[ferredoxin] + CoA = 2-methylpropanoyl-CoA + 2 reduced [2Fe-2S]-[ferredoxin] + CO2 + H(+). In Pyrococcus furiosus (strain ATCC 43587 / DSM 3638 / JCM 8422 / Vc1), this protein is Ketoisovalerate oxidoreductase subunit VorB (vorB).